The chain runs to 271 residues: Bifunctional protein FolD (271 aa).

NADP(+) contacts are provided by residues 154–156 (GRS), Thr181, and Ile222.

The protein belongs to the tetrahydrofolate dehydrogenase/cyclohydrolase family. As to quaternary structure, homodimer.

The enzyme catalyses (6R)-5,10-methylene-5,6,7,8-tetrahydrofolate + NADP(+) = (6R)-5,10-methenyltetrahydrofolate + NADPH. The catalysed reaction is (6R)-5,10-methenyltetrahydrofolate + H2O = (6R)-10-formyltetrahydrofolate + H(+). The protein operates within one-carbon metabolism; tetrahydrofolate interconversion. In terms of biological role, catalyzes the oxidation of 5,10-methylenetetrahydrofolate to 5,10-methenyltetrahydrofolate and then the hydrolysis of 5,10-methenyltetrahydrofolate to 10-formyltetrahydrofolate. This Thermosipho africanus (strain TCF52B) protein is Bifunctional protein FolD.